Here is a 481-residue protein sequence, read N- to C-terminus: ATP synthase subunit beta (481 aa).

An ATP-binding site is contributed by Gly-167–Thr-174.

The protein belongs to the ATPase alpha/beta chains family. In terms of assembly, F-type ATPases have 2 components, CF(1) - the catalytic core - and CF(0) - the membrane proton channel. CF(1) has five subunits: alpha(3), beta(3), gamma(1), delta(1), epsilon(1). CF(0) has three main subunits: a(1), b(2) and c(9-12). The alpha and beta chains form an alternating ring which encloses part of the gamma chain. CF(1) is attached to CF(0) by a central stalk formed by the gamma and epsilon chains, while a peripheral stalk is formed by the delta and b chains.

It is found in the cell membrane. It carries out the reaction ATP + H2O + 4 H(+)(in) = ADP + phosphate + 5 H(+)(out). Produces ATP from ADP in the presence of a proton gradient across the membrane. The catalytic sites are hosted primarily by the beta subunits. This Corynebacterium efficiens (strain DSM 44549 / YS-314 / AJ 12310 / JCM 11189 / NBRC 100395) protein is ATP synthase subunit beta.